The primary structure comprises 404 residues: Protein IQ-DOMAIN 12 (404 aa).

The tract at residues 8-25 (FGWMKRLFICEAKARAEK) is calmodulin-binding. The Nuclear localization signal 1 motif lies at 11-18 (MKRLFICE). 2 IQ domains span residues 108–135 (NVAA…ALVR) and 136–158 (LQAI…SSHS). The Nuclear localization signal 2 signature appears at 226 to 233 (IKRDRMLK).

Belongs to the IQD family. Binds to multiple calmodulin (CaM) in the presence of Ca(2+) and CaM-like proteins.

It is found in the nucleus. It localises to the cell membrane. Its function is as follows. May be involved in cooperative interactions with calmodulins or calmodulin-like proteins. Recruits calmodulin proteins to microtubules, thus being a potential scaffold in cellular signaling and trafficking. May associate with nucleic acids and regulate gene expression at the transcriptional or post-transcriptional level. In Arabidopsis thaliana (Mouse-ear cress), this protein is Protein IQ-DOMAIN 12.